The chain runs to 291 residues: Mitochondrial fission factor (291 aa).

Topologically, residues 1–271 are cytoplasmic; that stretch reads MAEISRIQYE…ENKERAKREM (271 aa). T89 carries the phosphothreonine modification. Residues 106–134 form a disordered region; sequence LERPLPTPQSEESRAVGRLKRERSMSENA. S129, S131, and S146 each carry phosphoserine. At T149 the chain carries Phosphothreonine. Residues S151, S178, S182, and S244 each carry the phosphoserine modification. The stretch at 240 to 271 forms a coiled coil; it reads VDAASLRRQIIKLNRRLQLLEEENKERAKREM. A helical; Anchor for type IV membrane protein membrane pass occupies residues 272–289; it reads VMYSITVAFWLLNSWLWF. The Mitochondrial intermembrane segment spans residues 290–291; sequence RR.

The protein belongs to the Tango11 family. In terms of assembly, homodimer. Interacts with DNM1L. Interacts with C11orf65/MFI; the interaction inhibits MFF interaction with DNM1L.

The protein resides in the mitochondrion outer membrane. Its subcellular location is the peroxisome. It localises to the cytoplasmic vesicle. The protein localises to the secretory vesicle. It is found in the synaptic vesicle. Functionally, plays a role in mitochondrial and peroxisomal fission. Promotes the recruitment and association of the fission mediator dynamin-related protein 1 (DNM1L) to the mitochondrial surface. May be involved in regulation of synaptic vesicle membrane dynamics by recruitment of DNM1L to clathrin-containing vesicles. The sequence is that of Mitochondrial fission factor (Mff) from Mus musculus (Mouse).